Consider the following 411-residue polypeptide: Zinc finger protein draculin (411 aa).

Positions 1–33 (MKNTTKPCRTEHHNAEGQRDRMEGNKKGETKAK) are disordered. Residues 8–32 (CRTEHHNAEGQRDRMEGNKKGETKA) show a composition bias toward basic and acidic residues. 13 C2H2-type zinc fingers span residues 36-58 (VACSHCKKRFSHKAHLQIHMRVH), 64-86 (YRCDQCGKCFPYKQSLKLHLDIH), 92-114 (YTCDECGESFKTRLQLRSHMTLH), 120-142 (YKCDQCEKSYGREDHLQRHMKLH), 148-170 (HKCEHCGKSFPMRDLLRSHLMVH), 176-198 (YTCDQCGKGFTLKKSYNEHMNIH), 204-226 (YTCDQCGKGFPYEQSLNLHMRFH), 232-254 (FTCDQCGQSFSQKGAYNIHMKIH), 260-282 (YTCDQCGMSFRHGYSLKLHMTHH), 288-310 (FHCDQCDKCYSTALFLKNHIKTH), 316-338 (YSCLTCGKTFNQLRGLRLHEKRH), 344-366 (FMCFDCGKCYFTDTELKQHLPVH), and 372-394 (YMCSLCFKSFPRMGSLIVHEKTH).

In terms of tissue distribution, specifically expressed in the hematopoietic lineage during embryogenesis; first expressed at the late blastula stage around the blastoderm margin. During gastrulation, restricted to the ventral mesoderm, the presumptive prechordal plate and the dorso-marginal cells of the organizer. At the 3-somite stage, strongly expressed in a caudal domain (marking the erythroid lineage) and a cephalic domain of the lateral mesoderm. At the 8- to 10-somite stage, caudal expression is in two bands of lateral mesoderm which later converge at the midline. Anterior expression is also in two bands of lateral mesoderm which converge as two patches at the midline by the 15-somite stage, with increased scattering of single cells (macrophage precursors) away from the midline to the yolksac. Once at the yolksac, expression is lost. By 20-24 hours post-fertilization (hpf), expressed in proerythroblasts in the erythroid blood island centered above the uro-genital opening. Expression persists in circulating erythroblasts but is lost in mature erythrocytes.

The protein is Zinc finger protein draculin of Danio rerio (Zebrafish).